The primary structure comprises 242 residues: Probable transcriptional regulatory protein PXO_01555 (242 aa).

It belongs to the TACO1 family.

The protein resides in the cytoplasm. This is Probable transcriptional regulatory protein PXO_01555 from Xanthomonas oryzae pv. oryzae (strain PXO99A).